The following is a 988-amino-acid chain: Bifunctional glutamine synthetase adenylyltransferase/adenylyl-removing enzyme (988 aa).

Residues 1 to 474 (MSSSAIDADI…HYSKLFEGDP (474 aa)) are adenylyl removase. The adenylyl transferase stretch occupies residues 480 to 988 (LPIDYAGGAE…FNRLIGGNGE (509 aa)).

This sequence belongs to the GlnE family. It depends on Mg(2+) as a cofactor.

The enzyme catalyses [glutamine synthetase]-O(4)-(5'-adenylyl)-L-tyrosine + phosphate = [glutamine synthetase]-L-tyrosine + ADP. The catalysed reaction is [glutamine synthetase]-L-tyrosine + ATP = [glutamine synthetase]-O(4)-(5'-adenylyl)-L-tyrosine + diphosphate. Involved in the regulation of glutamine synthetase GlnA, a key enzyme in the process to assimilate ammonia. When cellular nitrogen levels are high, the C-terminal adenylyl transferase (AT) inactivates GlnA by covalent transfer of an adenylyl group from ATP to specific tyrosine residue of GlnA, thus reducing its activity. Conversely, when nitrogen levels are low, the N-terminal adenylyl removase (AR) activates GlnA by removing the adenylyl group by phosphorolysis, increasing its activity. The regulatory region of GlnE binds the signal transduction protein PII (GlnB) which indicates the nitrogen status of the cell. This chain is Bifunctional glutamine synthetase adenylyltransferase/adenylyl-removing enzyme, found in Rhodopseudomonas palustris (strain HaA2).